Reading from the N-terminus, the 474-residue chain is Hydrogenobyrinate a,c-diamide synthase (474 aa).

In terms of domain architecture, GATase cobBQ-type spans 269 to 459 (VVAVAGGQAF…LHTHWAGCPQ (191 aa)). C352 serves as the catalytic Nucleophile.

It belongs to the CobB/CbiA family. Mg(2+) serves as cofactor.

It carries out the reaction hydrogenobyrinate + 2 L-glutamine + 2 ATP + 2 H2O = hydrogenobyrinate a,c-diamide + 2 L-glutamate + 2 ADP + 2 phosphate + 2 H(+). It functions in the pathway cofactor biosynthesis; adenosylcobalamin biosynthesis; cob(II)yrinate a,c-diamide from precorrin-2 (aerobic route): step 9/10. Its function is as follows. Catalyzes the ATP-dependent amidation of the two carboxylate groups at positions a and c of hydrogenobyrinate, using either L-glutamine or ammonia as the nitrogen source. The chain is Hydrogenobyrinate a,c-diamide synthase from Thermobifida fusca (strain YX).